The sequence spans 196 residues: Dephospho-CoA kinase (196 aa).

Positions 5–196 (IIGLTGGIAT…QVDIALNFEL (192 aa)) constitute a DPCK domain. ATP is bound at residue 13-18 (ATGKTT).

Belongs to the CoaE family.

The protein resides in the cytoplasm. It catalyses the reaction 3'-dephospho-CoA + ATP = ADP + CoA + H(+). The protein operates within cofactor biosynthesis; coenzyme A biosynthesis; CoA from (R)-pantothenate: step 5/5. In terms of biological role, catalyzes the phosphorylation of the 3'-hydroxyl group of dephosphocoenzyme A to form coenzyme A. This is Dephospho-CoA kinase from Trichormus variabilis (strain ATCC 29413 / PCC 7937) (Anabaena variabilis).